We begin with the raw amino-acid sequence, 348 residues long: [LysW]-L-2-aminoadipate 6-phosphate reductase (348 aa).

NADP(+) is bound at residue 14-17; it reads SGYA. Residue Cys151 is part of the active site. An NADP(+)-binding site is contributed by Asn315.

It belongs to the NAGSA dehydrogenase family. Type 1 subfamily. LysY sub-subfamily.

The protein resides in the cytoplasm. The enzyme catalyses [amino-group carrier protein]-C-terminal-N-(1-carboxy-5-oxopentan-1-yl)-L-glutamine + phosphate + NADP(+) = [amino-group carrier protein]-C-terminal-N-(1-carboxy-5-phosphooxy-5-oxopentan-1-yl)-L-glutamine + NADPH + H(+). Its pathway is amino-acid biosynthesis; L-lysine biosynthesis via AAA pathway; L-lysine from L-alpha-aminoadipate (Thermus route): step 3/5. Catalyzes the NADPH-dependent reduction of [LysW]-aminoadipate 6-phosphate to yield [LysW]-aminoadipate 6-semialdehyde. This Deinococcus radiodurans (strain ATCC 13939 / DSM 20539 / JCM 16871 / CCUG 27074 / LMG 4051 / NBRC 15346 / NCIMB 9279 / VKM B-1422 / R1) protein is [LysW]-L-2-aminoadipate 6-phosphate reductase.